The sequence spans 131 residues: Large ribosomal subunit protein bL12 (131 aa).

A compositionally biased stretch (basic and acidic residues) spans 100 to 125 (STPKPIKEGISKEDAEAAKKQLEDAG). The segment at 100-131 (STPKPIKEGISKEDAEAAKKQLEDAGGKVSIK) is disordered.

The protein belongs to the bacterial ribosomal protein bL12 family. Homodimer. Part of the ribosomal stalk of the 50S ribosomal subunit. Forms a multimeric L10(L12)X complex, where L10 forms an elongated spine to which 2 to 4 L12 dimers bind in a sequential fashion. Binds GTP-bound translation factors.

Forms part of the ribosomal stalk which helps the ribosome interact with GTP-bound translation factors. Is thus essential for accurate translation. This is Large ribosomal subunit protein bL12 from Cyanothece sp. (strain PCC 7425 / ATCC 29141).